A 520-amino-acid chain; its full sequence is Bifunctional dihydrofolate reductase-thymidylate synthase (520 aa).

One can recognise a DHFR domain in the interval 26 to 229 (AFSIVVALDM…LEFEICKYVP (204 aa)). V30 contacts substrate. NADP(+) is bound by residues A32 and 38 to 44 (GIGDGES). D52 is a binding site for substrate. NADP(+) is bound by residues 81–83 (RKT), 102–105 (LSSK), and 157–164 (GGAQVYAD). Residues Y162 and T180 each contribute to the substrate site. The segment at 234–520 (ERQYLELIDR…HPAIKMEMAV (287 aa)) is thymidylate synthase. R254 contacts dUMP. C400 is an active-site residue. DUMP contacts are provided by residues H401, 421–425 (QRSCD), N433, and 463–465 (HVY).

The protein in the N-terminal section; belongs to the dihydrofolate reductase family. It in the C-terminal section; belongs to the thymidylate synthase family.

The enzyme catalyses (6S)-5,6,7,8-tetrahydrofolate + NADP(+) = 7,8-dihydrofolate + NADPH + H(+). It catalyses the reaction dUMP + (6R)-5,10-methylene-5,6,7,8-tetrahydrofolate = 7,8-dihydrofolate + dTMP. Its pathway is cofactor biosynthesis; tetrahydrofolate biosynthesis; 5,6,7,8-tetrahydrofolate from 7,8-dihydrofolate: step 1/1. Its function is as follows. Bifunctional enzyme. Involved in de novo dTMP biosynthesis. Key enzyme in folate metabolism. Catalyzes an essential reaction for de novo glycine and purine synthesis, DNA precursor synthesis, and for the conversion of dUMP to dTMP. The protein is Bifunctional dihydrofolate reductase-thymidylate synthase of Leishmania major.